Reading from the N-terminus, the 368-residue chain is Phosphoserine aminotransferase (368 aa).

Arg44 provides a ligand contact to L-glutamate. Pyridoxal 5'-phosphate contacts are provided by residues 78–79, Trp104, Thr157, Asp179, and Gln202; that span reads AT. Position 203 is an N6-(pyridoxal phosphate)lysine (Lys203). A pyridoxal 5'-phosphate-binding site is contributed by 244–245; sequence NT.

It belongs to the class-V pyridoxal-phosphate-dependent aminotransferase family. SerC subfamily. As to quaternary structure, homodimer. Pyridoxal 5'-phosphate serves as cofactor.

It localises to the cytoplasm. The catalysed reaction is O-phospho-L-serine + 2-oxoglutarate = 3-phosphooxypyruvate + L-glutamate. It carries out the reaction 4-(phosphooxy)-L-threonine + 2-oxoglutarate = (R)-3-hydroxy-2-oxo-4-phosphooxybutanoate + L-glutamate. Its pathway is amino-acid biosynthesis; L-serine biosynthesis; L-serine from 3-phospho-D-glycerate: step 2/3. It functions in the pathway cofactor biosynthesis; pyridoxine 5'-phosphate biosynthesis; pyridoxine 5'-phosphate from D-erythrose 4-phosphate: step 3/5. Its function is as follows. Catalyzes the reversible conversion of 3-phosphohydroxypyruvate to phosphoserine and of 3-hydroxy-2-oxo-4-phosphonooxybutanoate to phosphohydroxythreonine. The protein is Phosphoserine aminotransferase of Neisseria meningitidis serogroup B (strain ATCC BAA-335 / MC58).